The sequence spans 845 residues: Extended synaptotagmin-2 (845 aa).

Residues 1 to 17 show a composition bias toward gly residues; the sequence is MSSAGGEGPEAGPGRAG. The segment at 1-26 is disordered; it reads MSSAGGEGPEAGPGRAGGRSEPEAPG. Over 1-27 the chain is Cytoplasmic; it reads MSSAGGEGPEAGPGRAGGRSEPEAPGS. Residues 28 to 48 traverse the membrane as a helical segment; the sequence is ALSVDLPGLLGQLARSFALLL. Over 49–51 the chain is Lumenal; that stretch reads PVY. Residues 52–72 traverse the membrane as a helical segment; that stretch reads ALGYLGLSFSWVLLALGLLAW. Over 73-845 the chain is Cytoplasmic; that stretch reads CRRSRGLKAS…EDGTRPQVIT (773 aa). The SMP-LTD domain occupies 115 to 294; that stretch reads DTERAEWLNK…LPNRITVPLV (180 aa). C2 domains lie at 293–413 and 442–563; these read LVSE…DEWF and VLAD…QLSN. Residues Lys-324, Asp-325, Asp-337, Asp-384, Glu-385, Asp-386, Asp-388, Asp-390, and Asp-391 each coordinate Ca(2+). The segment at 584-664 is disordered; that stretch reads QERPPDYQHS…RDLGRSSSSL (81 aa). The segment covering 612 to 628 has biased composition (polar residues); the sequence is SQMSASPGTGGANTAPS. 2 positions are modified to phosphoserine: Ser-615 and Ser-617. Thr-629 carries the post-translational modification Phosphothreonine. Over residues 634 to 645 the composition is skewed to basic and acidic residues; it reads VDDKPAMEEKPQ. Phosphoserine is present on residues Ser-660, Ser-662, Ser-663, Ser-667, Ser-679, Ser-682, and Ser-685. The C2 3 domain occupies 710 to 832; that stretch reads PLGQIQLTIR…ELAKGWTQWY (123 aa). Positions 757–764 are required for phosphatidylinositol 4,5-bisphosphate-dependent location at the cell membrane; the sequence is KRRSGRRK.

The protein belongs to the extended synaptotagmin family. In terms of assembly, homodimer. Interacts with ESYT1 and ESYT3. Interacts with FGFR1 that has been activated by FGF1 binding. Interacts with the AP-2 complex; identified in a complex with the AP-2 complex and FGFR1.

It localises to the cell membrane. The protein resides in the endoplasmic reticulum membrane. Tethers the endoplasmic reticulum to the cell membrane and promotes the formation of appositions between the endoplasmic reticulum and the cell membrane. Binds glycerophospholipids in a barrel-like domain and may play a role in cellular lipid transport. Plays a role in FGF signaling via its role in the rapid internalization of FGFR1 that has been activated by FGF1 binding; this occurs most likely via the AP-2 complex. Promotes the localization of SACM1L at endoplasmic reticulum-plasma membrane contact sites (EPCS). The sequence is that of Extended synaptotagmin-2 (Esyt2) from Mus musculus (Mouse).